Consider the following 307-residue polypeptide: Ribonuclease Z (307 aa).

Residues His-63, His-65, Asp-67, His-68, His-141, Asp-212, and His-270 each coordinate Zn(2+). The active-site Proton acceptor is the Asp-67.

The protein belongs to the RNase Z family. In terms of assembly, homodimer. Requires Zn(2+) as cofactor.

The catalysed reaction is Endonucleolytic cleavage of RNA, removing extra 3' nucleotides from tRNA precursor, generating 3' termini of tRNAs. A 3'-hydroxy group is left at the tRNA terminus and a 5'-phosphoryl group is left at the trailer molecule.. In terms of biological role, zinc phosphodiesterase, which displays some tRNA 3'-processing endonuclease activity. Probably involved in tRNA maturation, by removing a 3'-trailer from precursor tRNA. The chain is Ribonuclease Z from Bacillus cereus (strain G9842).